Consider the following 234-residue polypeptide: Zein-alpha GZ19AB11 (234 aa).

A signal peptide spans 1–21 (MAAKIFCLLMLLGLSASAATA).

This sequence belongs to the zein family.

Functionally, zeins are major seed storage proteins. The sequence is that of Zein-alpha GZ19AB11 from Zea mays (Maize).